A 433-amino-acid polypeptide reads, in one-letter code: Tol-Pal system protein TolB (433 aa).

Positions 1–21 (MIKRLRGLLVLLCCVAGMAMA) are cleaved as a signal peptide.

This sequence belongs to the TolB family. The Tol-Pal system is composed of five core proteins: the inner membrane proteins TolA, TolQ and TolR, the periplasmic protein TolB and the outer membrane protein Pal. They form a network linking the inner and outer membranes and the peptidoglycan layer.

It is found in the periplasm. Functionally, part of the Tol-Pal system, which plays a role in outer membrane invagination during cell division and is important for maintaining outer membrane integrity. The chain is Tol-Pal system protein TolB from Pseudomonas entomophila (strain L48).